A 357-amino-acid polypeptide reads, in one-letter code: Naringenin,2-oxoglutarate 3-dioxygenase (357 aa).

The Fe2OG dioxygenase domain maps to 189 to 293 (CVDMDQKIVV…RLSIATFQNP (105 aa)). His-216, Asp-218, and His-274 together coordinate Fe cation. Arg-284 contacts 2-oxoglutarate.

It belongs to the iron/ascorbate-dependent oxidoreductase family. Fe(2+) serves as cofactor. The cofactor is L-ascorbate.

It catalyses the reaction a (2S)-flavan-4-one + 2-oxoglutarate + O2 = a (2R,3R)-dihydroflavonol + succinate + CO2. It functions in the pathway secondary metabolite biosynthesis; flavonoid biosynthesis. Its function is as follows. Catalyzes the 3-beta-hydroxylation of 2S-flavanones to 2R,3R-dihydroflavonols which are intermediates in the biosynthesis of flavonols, anthocyanidins, catechins and proanthocyanidins in plants. This is Naringenin,2-oxoglutarate 3-dioxygenase (FHT) from Matthiola incana (Common stock).